The chain runs to 211 residues: Small ribosomal subunit protein uS3 (211 aa).

Residues 38–106 (LRSFVKKTFH…EVELHIVEVK (69 aa)) enclose the KH type-2 domain.

The protein belongs to the universal ribosomal protein uS3 family. As to quaternary structure, part of the 30S ribosomal subunit. Forms a tight complex with proteins S10 and S14.

Functionally, binds the lower part of the 30S subunit head. Binds mRNA in the 70S ribosome, positioning it for translation. This Anaplasma phagocytophilum (strain HZ) protein is Small ribosomal subunit protein uS3.